The sequence spans 434 residues: MECLRCLPGLLPRAAQPRRALWTAVARLSLAACGGRATPLRSRSPKASSTARAAGDVLRFRTSDASQATLASVAQVFAVTKFDKEGNVTSFERKKTELYHELALQARDLRFQHVMSITTRNNRIIMRMEYLKAVITPECLLILDYRNLNLEHWLFRELPSQLAGEGQLVTYPLPFEFRAIEALLQYWISTLRGRLSVLQPLILETLDALVDPKHSSVDRSKLHVLLQNGKSLSELETDIKIFKESILELLDEEEMLEELCLTKWSDPHVFEKSSTGIDHAEEMELLLENYYRLAEDLSNEARELRVLIDDSQSIIFINLDSHRNVMMRLNLQLTMGTFSLSLFGLMGVAFGMNLESSLEEDHRVFWLVTGIMFMGSGLIWRRLLSFLGRQLEAPVPPVMTSLPKKTLLANRRMDVKNSLRPEGLGASRTILASR.

The transit peptide at 1-53 (MECLRCLPGLLPRAAQPRRALWTAVARLSLAACGGRATPLRSRSPKASSTARA) directs the protein to the mitochondrion. Residues 54–330 (AGDVLRFRTS…SHRNVMMRLN (277 aa)) are Mitochondrial matrix-facing. The Mg(2+) site is built by E234, T237, D238, E303, and D320. Residues 331–350 (LQLTMGTFSLSLFGLMGVAF) traverse the membrane as a helical segment. 2 residues coordinate Mg(2+): G351 and N353. The short motif at 351–353 (GMN) is the GMN motif element. Residues 351-361 (GMNLESSLEED) lie on the Mitochondrial intermembrane side of the membrane. The chain crosses the membrane as a helical span at residues 362-392 (HRVFWLVTGIMFMGSGLIWRRLLSFLGRQLE). Residues 393 to 434 (APVPPVMTSLPKKTLLANRRMDVKNSLRPEGLGASRTILASR) lie on the Mitochondrial matrix side of the membrane.

This sequence belongs to the CorA metal ion transporter (MIT) (TC 1.A.35) family. In terms of assembly, homopentamer. Ubiquitously expressed.

It is found in the mitochondrion inner membrane. May be regulated by calcium ions. In terms of biological role, magnesium transporter that mediates the influx of magnesium into the mitochondrial matrix and regulates magnesium metabolism. Also permeable to calcium, sodium and potassium ions. Required for normal expression of the mitochondrial respiratory complex I subunits. May play a role in maintaining the inner mitochondrial membrane potential. This Mus musculus (Mouse) protein is Magnesium transporter MRS2 homolog, mitochondrial (Mrs2).